The chain runs to 379 residues: MSELSFDAPVWHHGKALRKGYTTGSCATAAAKVAALMVLRQHLIHQVSIVTPSGVTLCLNVESPHIEGQQAIAAIRKDGGDDVDATHGMLIFARVTLNDSGEITLTGGEGIGTVTRKGIGLPLGSAAINRTPRHTIESAVREAIGPARGADVEIFAPEGEVRAQKTYNSRLGILGGISIIGTTGIVTPMSEESWKRSLSLELEIKRASGLTRVILVPGNHGERFVREQMGVDTQAVVTMSNFVGYMIEEAVRLGFCQIVLVGHPGKLIKIAAGIFHTHSHIADARMETLVAHLALLGAPLELLTLVSDCDTTEAAMEHIEAYGFGHIYNHLARRICLRVMQMLRFTKTQPVCDAILFSFDNHILGSNRPVDEIAKELQC.

The protein belongs to the CbiD family.

The catalysed reaction is Co-precorrin-5B + S-adenosyl-L-methionine = Co-precorrin-6A + S-adenosyl-L-homocysteine. It functions in the pathway cofactor biosynthesis; adenosylcobalamin biosynthesis; cob(II)yrinate a,c-diamide from sirohydrochlorin (anaerobic route): step 6/10. Functionally, catalyzes the methylation of C-1 in cobalt-precorrin-5B to form cobalt-precorrin-6A. The sequence is that of Cobalt-precorrin-5B C(1)-methyltransferase from Salmonella heidelberg (strain SL476).